Here is a 218-residue protein sequence, read N- to C-terminus: MDKSESTSAGRNRRRRPRRGSRSAPSSADANFRVLSQQLSRLNKTLAAGRPTINHPTFVGSERCKPGYTFTSITLKPPKIDRGSYYGKRLLLPDSVTEYDKKLVSRIQIRVNPLRKFDSTVWVTVRKVPASSDLSVAAISAMFADGASPVLVYQYAASGVQANNKLLYDLSAMRADIGDMRKYAVLVYSKDDALETDELVLHVDVEHQRIPTSGVLPV.

The residue at position 1 (M1) is an N-acetylmethionine; by host. The interval 1 to 28 (MDKSESTSAGRNRRRRPRRGSRSAPSSA) is disordered. The segment covering 11 to 21 (RNRRRRPRRGS) has biased composition (basic residues).

It belongs to the cucumovirus capsid protein family.

The protein resides in the virion. Capsid protein. Probably binds RNA and plays a role in packaging. In Cucumis sativus (Cucumber), this protein is Capsid protein.